Consider the following 405-residue polypeptide: 3-hydroxy-3-methylglutaryl-coenzyme A reductase (405 aa).

Residues Glu-100 and Asp-310 each act as charge relay system in the active site. His-400 (proton donor) is an active-site residue.

It belongs to the HMG-CoA reductase family.

It carries out the reaction (R)-mevalonate + 2 NADP(+) + CoA = (3S)-3-hydroxy-3-methylglutaryl-CoA + 2 NADPH + 2 H(+). It functions in the pathway metabolic intermediate biosynthesis; (R)-mevalonate biosynthesis; (R)-mevalonate from acetyl-CoA: step 3/3. Its function is as follows. Converts HMG-CoA to mevalonate. The sequence is that of 3-hydroxy-3-methylglutaryl-coenzyme A reductase (hmgA) from Methanocaldococcus jannaschii (strain ATCC 43067 / DSM 2661 / JAL-1 / JCM 10045 / NBRC 100440) (Methanococcus jannaschii).